The primary structure comprises 252 residues: 3-dehydroquinate dehydratase (252 aa).

3-dehydroquinate-binding positions include S21, 46–48, and R82; that span reads EWR. H143 serves as the catalytic Proton donor/acceptor. Residue K170 is the Schiff-base intermediate with substrate of the active site. 3-dehydroquinate contacts are provided by R213, S232, and Q236.

Belongs to the type-I 3-dehydroquinase family. In terms of assembly, homodimer.

It catalyses the reaction 3-dehydroquinate = 3-dehydroshikimate + H2O. It functions in the pathway metabolic intermediate biosynthesis; chorismate biosynthesis; chorismate from D-erythrose 4-phosphate and phosphoenolpyruvate: step 3/7. In terms of biological role, involved in the third step of the chorismate pathway, which leads to the biosynthesis of aromatic amino acids. Catalyzes the cis-dehydration of 3-dehydroquinate (DHQ) and introduces the first double bond of the aromatic ring to yield 3-dehydroshikimate. The polypeptide is 3-dehydroquinate dehydratase (Escherichia coli (strain SE11)).